Consider the following 634-residue polypeptide: 1-deoxy-D-xylulose-5-phosphate synthase (634 aa).

Thiamine diphosphate is bound by residues His-72 and 113-115; that span reads GHS. Asp-144 serves as a coordination point for Mg(2+). Thiamine diphosphate-binding positions include 145 to 146, Asn-173, Tyr-284, and Glu-367; that span reads GA. Residue Asn-173 participates in Mg(2+) binding.

Belongs to the transketolase family. DXPS subfamily. As to quaternary structure, homodimer. It depends on Mg(2+) as a cofactor. The cofactor is thiamine diphosphate.

It carries out the reaction D-glyceraldehyde 3-phosphate + pyruvate + H(+) = 1-deoxy-D-xylulose 5-phosphate + CO2. Its pathway is metabolic intermediate biosynthesis; 1-deoxy-D-xylulose 5-phosphate biosynthesis; 1-deoxy-D-xylulose 5-phosphate from D-glyceraldehyde 3-phosphate and pyruvate: step 1/1. Functionally, catalyzes the acyloin condensation reaction between C atoms 2 and 3 of pyruvate and glyceraldehyde 3-phosphate to yield 1-deoxy-D-xylulose-5-phosphate (DXP). The protein is 1-deoxy-D-xylulose-5-phosphate synthase of Listeria welshimeri serovar 6b (strain ATCC 35897 / DSM 20650 / CCUG 15529 / CIP 8149 / NCTC 11857 / SLCC 5334 / V8).